The following is a 562-amino-acid chain: Glutamate--tRNA ligase (562 aa).

Residues proline 104–asparagine 114 carry the 'HIGH' region motif.

Belongs to the class-I aminoacyl-tRNA synthetase family. Glutamate--tRNA ligase type 2 subfamily.

Its subcellular location is the cytoplasm. The catalysed reaction is tRNA(Glu) + L-glutamate + ATP = L-glutamyl-tRNA(Glu) + AMP + diphosphate. In terms of biological role, catalyzes the attachment of glutamate to tRNA(Glu) in a two-step reaction: glutamate is first activated by ATP to form Glu-AMP and then transferred to the acceptor end of tRNA(Glu). This is Glutamate--tRNA ligase from Ignicoccus hospitalis (strain KIN4/I / DSM 18386 / JCM 14125).